The sequence spans 48 residues: Small, acid-soluble spore protein P (48 aa).

Residues 1-12 (MTNKNDGKDMRK) are compositionally biased toward basic and acidic residues. The segment at 1 to 48 (MTNKNDGKDMRKNAPKGAQPGQPEPLSGSKKVKNRNHTRQKHNSSHDM) is disordered. Positions 30–48 (KKVKNRNHTRQKHNSSHDM) are enriched in basic residues.

This sequence belongs to the SspP family.

It is found in the spore core. This is Small, acid-soluble spore protein P from Bacillus licheniformis (strain ATCC 14580 / DSM 13 / JCM 2505 / CCUG 7422 / NBRC 12200 / NCIMB 9375 / NCTC 10341 / NRRL NRS-1264 / Gibson 46).